The chain runs to 122 residues: Large ribosomal subunit protein uL14 (122 aa).

The protein belongs to the universal ribosomal protein uL14 family. Part of the 50S ribosomal subunit. Forms a cluster with proteins L3 and L19. In the 70S ribosome, L14 and L19 interact and together make contacts with the 16S rRNA in bridges B5 and B8.

Its function is as follows. Binds to 23S rRNA. Forms part of two intersubunit bridges in the 70S ribosome. This Agrobacterium fabrum (strain C58 / ATCC 33970) (Agrobacterium tumefaciens (strain C58)) protein is Large ribosomal subunit protein uL14.